The sequence spans 311 residues: tRNA-cytidine(32) 2-sulfurtransferase (311 aa).

A PP-loop motif motif is present at residues 58 to 63; that stretch reads SGGKDS. [4Fe-4S] cluster is bound by residues cysteine 133, cysteine 136, and cysteine 224.

The protein belongs to the TtcA family. As to quaternary structure, homodimer. The cofactor is Mg(2+). It depends on [4Fe-4S] cluster as a cofactor.

It localises to the cytoplasm. It catalyses the reaction cytidine(32) in tRNA + S-sulfanyl-L-cysteinyl-[cysteine desulfurase] + AH2 + ATP = 2-thiocytidine(32) in tRNA + L-cysteinyl-[cysteine desulfurase] + A + AMP + diphosphate + H(+). Its pathway is tRNA modification. Its function is as follows. Catalyzes the ATP-dependent 2-thiolation of cytidine in position 32 of tRNA, to form 2-thiocytidine (s(2)C32). The sulfur atoms are provided by the cysteine/cysteine desulfurase (IscS) system. The polypeptide is tRNA-cytidine(32) 2-sulfurtransferase (Polaromonas sp. (strain JS666 / ATCC BAA-500)).